A 141-amino-acid polypeptide reads, in one-letter code: Large-conductance mechanosensitive channel (141 aa).

2 helical membrane passes run 16–36 (VVDL…VSSM) and 83–103 (GNFI…FLMV).

This sequence belongs to the MscL family. As to quaternary structure, homopentamer.

It localises to the cell inner membrane. Channel that opens in response to stretch forces in the membrane lipid bilayer. May participate in the regulation of osmotic pressure changes within the cell. The sequence is that of Large-conductance mechanosensitive channel from Cytophaga hutchinsonii (strain ATCC 33406 / DSM 1761 / CIP 103989 / NBRC 15051 / NCIMB 9469 / D465).